A 618-amino-acid polypeptide reads, in one-letter code: Uptake hydrogenase large subunit (618 aa).

Cys-75, Cys-78, Cys-597, and Cys-600 together coordinate Ni(2+).

It belongs to the [NiFe]/[NiFeSe] hydrogenase large subunit family. Heterodimer of a large and a small subunit. Ni(2+) is required as a cofactor.

It is found in the cell membrane. The catalysed reaction is H2 + A = AH2. Functionally, this enzyme recycles the H(2) produced by nitrogenase to increase the production of ATP and to protect nitrogenase against inhibition or damage by O(2) under carbon- or phosphate-limited conditions. The polypeptide is Uptake hydrogenase large subunit (hoxG) (Cupriavidus necator (strain ATCC 17699 / DSM 428 / KCTC 22496 / NCIMB 10442 / H16 / Stanier 337) (Ralstonia eutropha)).